A 388-amino-acid polypeptide reads, in one-letter code: Staphopain A (388 aa).

The first 25 residues, 1–25 (MKRNFPKLIALSLIFSLSITPIANA), serve as a signal peptide directing secretion. Positions 26–214 (ESNSNIKAKD…TSQFKSNNYT (189 aa)) are excised as a propeptide. Catalysis depends on residues Cys238, His334, and Asn355.

This sequence belongs to the peptidase C47 family. In terms of assembly, in the cytoplasm, prematurely activated/folded ScpA forms a stable non-covalent complex with ScpB. Cleavage leads to the activation of ScpA probably by an auto-catalytic manner.

The protein localises to the secreted. It catalyses the reaction Broad endopeptidase action on proteins including elastin, but rather limited hydrolysis of small-molecule substrates. Assays are conveniently made with hemoglobin, casein or Z-Phe-Arg-NHMec as substrate.. Prematurely activated/folded staphopain A is inhibited by staphostatin A (ScpB), which is probably required to protect staphylococcal cytoplasmic proteins from degradation by ScpA. Cysteine protease that plays an important role in the inhibition of host innate immune response. Cleaves host elastins found in connective tissues, pulmonary surfactant protein A in the lungs, and the chemokine receptor CXCR2 on leukocytes. Proteolytic cleavage of surfactant protein A impairs bacterial phagocytosis by neutrophils while CXCR2 degradation blocks neutrophil activation and chemotaxis. Additionally, promotes vascular leakage by activating the plasma kallikerin/kinin system, resulting in hypotension. The sequence is that of Staphopain A (sspP) from Staphylococcus aureus (strain MRSA252).